We begin with the raw amino-acid sequence, 552 residues long: CTP synthase (552 aa).

Residues 1–270 (MTKFVFVTGG…DGLICDKLRL (270 aa)) form an amidoligase domain region. Serine 13 is a CTP binding site. A UTP-binding site is contributed by serine 13. Residues 14–19 (SLGKGI) and aspartate 71 each bind ATP. Residues aspartate 71 and glutamate 144 each contribute to the Mg(2+) site. CTP contacts are provided by residues 151 to 153 (DIE), 191 to 196 (KTKPTQ), and lysine 227. Residues 191–196 (KTKPTQ) and lysine 227 contribute to the UTP site. Residues 295–548 (QIAMVGKYVE…IKAAVEHQKP (254 aa)) form the Glutamine amidotransferase type-1 domain. L-glutamine is bound at residue glycine 357. The active-site Nucleophile; for glutamine hydrolysis is the cysteine 384. L-glutamine is bound by residues 385–388 (LGMQ), glutamate 408, and arginine 474. Residues histidine 521 and glutamate 523 contribute to the active site.

This sequence belongs to the CTP synthase family. As to quaternary structure, homotetramer.

The enzyme catalyses UTP + L-glutamine + ATP + H2O = CTP + L-glutamate + ADP + phosphate + 2 H(+). It catalyses the reaction L-glutamine + H2O = L-glutamate + NH4(+). The catalysed reaction is UTP + NH4(+) + ATP = CTP + ADP + phosphate + 2 H(+). The protein operates within pyrimidine metabolism; CTP biosynthesis via de novo pathway; CTP from UDP: step 2/2. Allosterically activated by GTP, when glutamine is the substrate; GTP has no effect on the reaction when ammonia is the substrate. The allosteric effector GTP functions by stabilizing the protein conformation that binds the tetrahedral intermediate(s) formed during glutamine hydrolysis. Inhibited by the product CTP, via allosteric rather than competitive inhibition. Functionally, catalyzes the ATP-dependent amination of UTP to CTP with either L-glutamine or ammonia as the source of nitrogen. Regulates intracellular CTP levels through interactions with the four ribonucleotide triphosphates. In Acidovorax ebreus (strain TPSY) (Diaphorobacter sp. (strain TPSY)), this protein is CTP synthase.